A 623-amino-acid polypeptide reads, in one-letter code: UvrABC system protein C (623 aa).

The GIY-YIG domain occupies 28-105 (GAPGVYRMLD…IKQLKPKYNV (78 aa)). A UVR domain is found at 215-250 (TRVQEELAEQMMAASEAMEFERAAALRDRIRALTTV).

The protein belongs to the UvrC family. In terms of assembly, interacts with UvrB in an incision complex.

Its subcellular location is the cytoplasm. In terms of biological role, the UvrABC repair system catalyzes the recognition and processing of DNA lesions. UvrC both incises the 5' and 3' sides of the lesion. The N-terminal half is responsible for the 3' incision and the C-terminal half is responsible for the 5' incision. The sequence is that of UvrABC system protein C from Ruegeria pomeroyi (strain ATCC 700808 / DSM 15171 / DSS-3) (Silicibacter pomeroyi).